Here is a 93-residue protein sequence, read N- to C-terminus: Neutrophil cationic peptide 1 type B (93 aa).

Residues 1 to 19 (MRTVPLFAACLLLTLMAQA) form the signal peptide. The propeptide occupies 20 to 62 (EPLPRAADHSDTKMKGDREDHVAVISFWEEESTSLQDAGAGAG). Disulfide bonds link Cys65–Cys93, Cys67–Cys82, and Cys72–Cys92.

It belongs to the alpha-defensin family. In terms of tissue distribution, bone marrow.

It localises to the secreted. Has antibiotic, anti-fungi and antiviral activity. This Cavia porcellus (Guinea pig) protein is Neutrophil cationic peptide 1 type B.